Reading from the N-terminus, the 419-residue chain is Phosphoglycerate kinase (419 aa).

Residues 42-44 (DLN), Arg-58, 81-84 (HLGR), Arg-135, and Arg-168 contribute to the substrate site. ATP contacts are provided by residues Lys-219, Glu-341, and 367 to 370 (GGDT).

This sequence belongs to the phosphoglycerate kinase family. As to quaternary structure, monomer.

The protein resides in the cytoplasm. The enzyme catalyses (2R)-3-phosphoglycerate + ATP = (2R)-3-phospho-glyceroyl phosphate + ADP. It functions in the pathway carbohydrate degradation; glycolysis; pyruvate from D-glyceraldehyde 3-phosphate: step 2/5. The polypeptide is Phosphoglycerate kinase (Ralstonia nicotianae (strain ATCC BAA-1114 / GMI1000) (Ralstonia solanacearum)).